The following is a 620-amino-acid chain: Protein phosphatase 2C-like domain-containing protein 1 (620 aa).

In terms of domain architecture, PPM-type phosphatase spans 173–611; the sequence is GIAICSNNNS…DSITVMVMFL (439 aa).

The protein belongs to the PP2C family.

In Mus musculus (Mouse), this protein is Protein phosphatase 2C-like domain-containing protein 1 (Pp2d1).